Reading from the N-terminus, the 426-residue chain is Glutamate-1-semialdehyde 2,1-aminomutase (426 aa).

At Lys265 the chain carries N6-(pyridoxal phosphate)lysine.

Belongs to the class-III pyridoxal-phosphate-dependent aminotransferase family. HemL subfamily. Homodimer. Pyridoxal 5'-phosphate is required as a cofactor.

Its subcellular location is the cytoplasm. It carries out the reaction (S)-4-amino-5-oxopentanoate = 5-aminolevulinate. The protein operates within porphyrin-containing compound metabolism; protoporphyrin-IX biosynthesis; 5-aminolevulinate from L-glutamyl-tRNA(Glu): step 2/2. This chain is Glutamate-1-semialdehyde 2,1-aminomutase (hemL), found in Salmonella typhimurium (strain SL1344).